We begin with the raw amino-acid sequence, 30 residues long: GLPVCGESCFGGTCNTPGCACDPWPVCTRD.

The cyclopeptide (Gly-Asp) cross-link spans 1 to 30 (GLPVCGESCFGGTCNTPGCACDPWPVCTRD). Disulfide bonds link Cys-5–Cys-19, Cys-9–Cys-21, and Cys-14–Cys-27.

This is a cyclic peptide.

Probably participates in a plant defense mechanism. In Oldenlandia affinis, this protein is Kalata-B14.